We begin with the raw amino-acid sequence, 304 residues long: Tyrosine recombinase XerD (304 aa).

The region spanning 1–92 (MKARVLAKTW…VARGLHKFAL (92 aa)) is the Core-binding (CB) domain. Residues 113-298 (HLPDTLSINE…TADSLREVWR (186 aa)) enclose the Tyr recombinase domain. Residues R156, K180, H250, R253, and H276 contribute to the active site. The active-site O-(3'-phospho-DNA)-tyrosine intermediate is Y285.

It belongs to the 'phage' integrase family. XerD subfamily. Forms a cyclic heterotetrameric complex composed of two molecules of XerC and two molecules of XerD.

It is found in the cytoplasm. In terms of biological role, site-specific tyrosine recombinase, which acts by catalyzing the cutting and rejoining of the recombining DNA molecules. The XerC-XerD complex is essential to convert dimers of the bacterial chromosome into monomers to permit their segregation at cell division. It also contributes to the segregational stability of plasmids. This is Tyrosine recombinase XerD from Corynebacterium glutamicum (strain ATCC 13032 / DSM 20300 / JCM 1318 / BCRC 11384 / CCUG 27702 / LMG 3730 / NBRC 12168 / NCIMB 10025 / NRRL B-2784 / 534).